We begin with the raw amino-acid sequence, 206 residues long: Heterochromatin protein 1 (206 aa).

2 disordered regions span residues 1–24 (MGKKIDNPESSAKVSDAEEEEEEY) and 47–145 (GYPE…GFDR). Phosphoserine is present on residues S11 and S15. The 59-residue stretch at 24 to 82 (YAVEKIIDRRVRKGKVEYYLKWKGYPETENTWEPENNLDCQDLIQQYEASRKDEEKSAA) folds into the Chromo 1 domain. A compositionally biased stretch (low complexity) spans 50–60 (ETENTWEPENN). The span at 72–98 (ASRKDEEKSAASKKDRPSSSAKAKETQ) shows a compositional bias: basic and acidic residues. The binds to Su(var)39 stretch occupies residues 95-206 (KETQGRASSS…RLSWYSDNED (112 aa)). Phosphoserine is present on residues S102, S103, and S113. A phosphothreonine mark is found at T127, T128, and T134. The 59-residue stretch at 147-205 (LEAEKILGASDNNGRLTFLIQFKGVDQAEMVPSSVANEKIPRMVIHFYEERLSWYSDNE) folds into the Chromo 2 domain.

As to quaternary structure, homodimer. Probably associates with Su(var)3-9. Interacts with Mcm10. Interacts (via chromoshadow domain) with piwi (via N-terminal region). Interacts with Rrp6. Associates with and may be part of the HipHop-HOAP telomere capping complex but is not required for its stability or telomere localization. Interacts (via the chromo domain 2 (chromoshadow domain) and the hinge region between chromo domains 1 and 2) with cav/HOAP (via C-terminus); the interaction is direct. Each molecule of cav/HOAP interacts with 2 molecules of Su(var)205/HP1. Interacts with HipHop (via N-terminus). Interacts with moi/modigliani; the interaction is direct. Interacts (via chromo domain 1) with His3/histone 3 (via N-terminal tail methylated at 'Lys-10'); the interaction is direct. In terms of tissue distribution, salivary gland (at protein level).

It is found in the nucleus. The protein resides in the nucleoplasm. Its subcellular location is the chromosome. The protein localises to the telomere. Its function is as follows. Structural component of heterochromatin, involved in gene repression and the modification of position-effect-variegation. Recognizes and binds histone H3 tails methylated at 'Lys-9', leading to epigenetic repression. Stabilizes chromatin-associated RNAs probably by binding to them and thereby preventing their degradation. Associates with, and may be a part of, the HipHop-HOAP complex that recruits the MTV complex to form the terminin telomere-capping complex, which binds to chromosome ends in a sequence-independent manner and prevents telomere fusion. Telomere capping is independent of the origin recognition complex (ORC). The polypeptide is Heterochromatin protein 1 (Drosophila melanogaster (Fruit fly)).